The sequence spans 134 residues: Large ribosomal subunit protein eL32 (134 aa).

Belongs to the eukaryotic ribosomal protein eL32 family.

This chain is Large ribosomal subunit protein eL32 (RpL32), found in Drosophila acanthoptera (Fruit fly).